The following is a 602-amino-acid chain: Aspartate--tRNA(Asp/Asn) ligase (602 aa).

An L-aspartate-binding site is contributed by glutamate 176. An aspartate region spans residues 200–203; sequence QQFK. L-aspartate-binding residues include arginine 222 and histidine 452. 222-224 is a binding site for ATP; it reads RDE. Glutamate 490 lines the ATP pocket. Residue arginine 497 participates in L-aspartate binding. Residue 542 to 545 participates in ATP binding; sequence GIDR.

The protein belongs to the class-II aminoacyl-tRNA synthetase family. Type 1 subfamily. Homodimer.

Its subcellular location is the cytoplasm. The enzyme catalyses tRNA(Asx) + L-aspartate + ATP = L-aspartyl-tRNA(Asx) + AMP + diphosphate. Functionally, aspartyl-tRNA synthetase with relaxed tRNA specificity since it is able to aspartylate not only its cognate tRNA(Asp) but also tRNA(Asn). Reaction proceeds in two steps: L-aspartate is first activated by ATP to form Asp-AMP and then transferred to the acceptor end of tRNA(Asp/Asn). The sequence is that of Aspartate--tRNA(Asp/Asn) ligase from Rickettsia canadensis (strain McKiel).